We begin with the raw amino-acid sequence, 834 residues long: Periplasmic nitrate reductase (834 aa).

Residues 1–29 (MKLSRREFAKANAAAIAAAAAGLPLASTA) constitute a signal peptide (tat-type signal). Positions 41–97 (LDWNKAPCRFCGTGCSVMVATRDNRVVATHGDVKAEVNRGLNCVKGYFLSKIMYGVD) constitute a 4Fe-4S Mo/W bis-MGD-type domain. The [4Fe-4S] cluster site is built by cysteine 48, cysteine 51, cysteine 55, and cysteine 83. Mo-bis(molybdopterin guanine dinucleotide) contacts are provided by residues lysine 85, glutamine 152, asparagine 177, cysteine 181, 214-221 (WGSNMAEM), 245-249 (STFEH), 264-266 (QTD), methionine 375, glutamine 379, asparagine 485, 511-512 (SD), lysine 534, aspartate 561, and 721-730 (TGRVLEHWHT). Residue phenylalanine 797 participates in substrate binding. 2 residues coordinate Mo-bis(molybdopterin guanine dinucleotide): asparagine 805 and lysine 822.

It belongs to the prokaryotic molybdopterin-containing oxidoreductase family. NasA/NapA/NarB subfamily. Component of the periplasmic nitrate reductase NapAB complex composed of NapA and NapB. [4Fe-4S] cluster is required as a cofactor. The cofactor is Mo-bis(molybdopterin guanine dinucleotide). Predicted to be exported by the Tat system. The position of the signal peptide cleavage has not been experimentally proven.

It localises to the periplasm. It carries out the reaction 2 Fe(II)-[cytochrome] + nitrate + 2 H(+) = 2 Fe(III)-[cytochrome] + nitrite + H2O. Its function is as follows. Catalytic subunit of the periplasmic nitrate reductase complex NapAB. Receives electrons from NapB and catalyzes the reduction of nitrate to nitrite. This chain is Periplasmic nitrate reductase, found in Ectopseudomonas mendocina (strain ymp) (Pseudomonas mendocina).